The chain runs to 566 residues: Bacillolysin (566 aa).

An N-terminal signal peptide occupies residues 1–27 (MKKKSLALVLATGMAVTTFGGTGSAFA). Residues 28–249 (DSKNVLSTKK…KQDAKAVVKP (222 aa)) constitute a propeptide, activation peptide. 4 residues coordinate Ca(2+): Asp-307, Asp-309, Val-311, and Asp-388. His-392 contacts Zn(2+). Residue Glu-393 is part of the active site. Zn(2+) is bound by residues His-396 and Glu-416. Ca(2+)-binding residues include Glu-427, Asn-433, Asp-435, Glu-437, Glu-440, Tyr-443, Thr-444, Lys-447, and Asp-450. His-481 functions as the Proton donor in the catalytic mechanism.

The protein belongs to the peptidase M4 family. Ca(2+) is required as a cofactor. The cofactor is Zn(2+).

It is found in the secreted. It catalyses the reaction Similar, but not identical, to that of thermolysin.. Extracellular zinc metalloprotease. This Bacillus cereus protein is Bacillolysin (npr).